Reading from the N-terminus, the 525-residue chain is 2,3-bisphosphoglycerate-independent phosphoglycerate mutase 2 (525 aa).

Residues aspartate 14 and serine 64 each contribute to the Mn(2+) site. The active-site Phosphoserine intermediate is the serine 64. Residues histidine 125, 155–156 (RD), arginine 187, arginine 193, 274–277 (RADR), and lysine 347 each bind substrate. 5 residues coordinate Mn(2+): aspartate 414, histidine 418, aspartate 455, histidine 456, and histidine 474.

The protein belongs to the BPG-independent phosphoglycerate mutase family. It depends on Mn(2+) as a cofactor.

The catalysed reaction is (2R)-2-phosphoglycerate = (2R)-3-phosphoglycerate. The protein operates within carbohydrate degradation; glycolysis; pyruvate from D-glyceraldehyde 3-phosphate: step 3/5. In terms of biological role, catalyzes the interconversion of 2-phosphoglycerate and 3-phosphoglycerate. This chain is 2,3-bisphosphoglycerate-independent phosphoglycerate mutase 2, found in Methanosarcina barkeri (strain Fusaro / DSM 804).